Reading from the N-terminus, the 221-residue chain is GTP cyclohydrolase-2 (221 aa).

63 to 67 (RLHSE) contributes to the GTP binding site. Residues C68, C79, and C81 each coordinate Zn(2+). Residues Q84, 107 to 109 (EGR), and T129 contribute to the GTP site. Residue D141 is the Proton acceptor of the active site. R143 functions as the Nucleophile in the catalytic mechanism. S164 and K169 together coordinate GTP.

Belongs to the GTP cyclohydrolase II family. The cofactor is Zn(2+).

It carries out the reaction GTP + 4 H2O = 2,5-diamino-6-hydroxy-4-(5-phosphoribosylamino)-pyrimidine + formate + 2 phosphate + 3 H(+). The protein operates within cofactor biosynthesis; riboflavin biosynthesis; 5-amino-6-(D-ribitylamino)uracil from GTP: step 1/4. In terms of biological role, catalyzes the conversion of GTP to 2,5-diamino-6-ribosylamino-4(3H)-pyrimidinone 5'-phosphate (DARP), formate and pyrophosphate. The sequence is that of GTP cyclohydrolase-2 from Streptomyces coelicolor (strain ATCC BAA-471 / A3(2) / M145).